The following is a 725-amino-acid chain: Ribosomal RNA large subunit methyltransferase K/L (725 aa).

The THUMP domain occupies valine 46–leucine 157.

Belongs to the methyltransferase superfamily. RlmKL family.

It is found in the cytoplasm. The enzyme catalyses guanosine(2445) in 23S rRNA + S-adenosyl-L-methionine = N(2)-methylguanosine(2445) in 23S rRNA + S-adenosyl-L-homocysteine + H(+). It catalyses the reaction guanosine(2069) in 23S rRNA + S-adenosyl-L-methionine = N(2)-methylguanosine(2069) in 23S rRNA + S-adenosyl-L-homocysteine + H(+). Specifically methylates the guanine in position 2445 (m2G2445) and the guanine in position 2069 (m7G2069) of 23S rRNA. In Pseudomonas aeruginosa (strain ATCC 15692 / DSM 22644 / CIP 104116 / JCM 14847 / LMG 12228 / 1C / PRS 101 / PAO1), this protein is Ribosomal RNA large subunit methyltransferase K/L.